Here is a 1059-residue protein sequence, read N- to C-terminus: Carbamoyl phosphate synthase large chain (1059 aa).

The carboxyphosphate synthetic domain stretch occupies residues 1-401 (MPKRKDIQKV…AMLKAVRSLE (401 aa)). Residues R129, R169, G175, G176, R208, I210, E215, G241, V242, H243, Q284, and E298 each coordinate ATP. The ATP-grasp 1 domain maps to 133–327 (KALMERLNEP…IAKMAAKIAV (195 aa)). The Mg(2+) site is built by Q284, E298, and N300. Mn(2+) is bound by residues Q284, E298, and N300. An oligomerization domain region spans residues 402–546 (IGVTGLNDLT…YATYERENES (145 aa)). The carbamoyl phosphate synthetic domain stretch occupies residues 547 to 929 (VRSKKPSVIV…ALYKAFVASN (383 aa)). The 191-residue stretch at 671-861 (DQVIKTLALP…LAQLATRVML (191 aa)) folds into the ATP-grasp 2 domain. Positions 707, 746, 748, 752, 777, 778, 779, 780, 820, and 832 each coordinate ATP. The Mg(2+) site is built by Q820, E832, and N834. 3 residues coordinate Mn(2+): Q820, E832, and N834. The MGS-like domain occupies 930-1059 (IKVPQYGNVL…SRSFTVNEMK (130 aa)). An allosteric domain region spans residues 930-1059 (IKVPQYGNVL…SRSFTVNEMK (130 aa)).

Belongs to the CarB family. As to quaternary structure, composed of two chains; the small (or glutamine) chain promotes the hydrolysis of glutamine to ammonia, which is used by the large (or ammonia) chain to synthesize carbamoyl phosphate. Tetramer of heterodimers (alpha,beta)4. It depends on Mg(2+) as a cofactor. Mn(2+) serves as cofactor.

It catalyses the reaction hydrogencarbonate + L-glutamine + 2 ATP + H2O = carbamoyl phosphate + L-glutamate + 2 ADP + phosphate + 2 H(+). It carries out the reaction hydrogencarbonate + NH4(+) + 2 ATP = carbamoyl phosphate + 2 ADP + phosphate + 2 H(+). Its pathway is amino-acid biosynthesis; L-arginine biosynthesis; carbamoyl phosphate from bicarbonate: step 1/1. The protein operates within pyrimidine metabolism; UMP biosynthesis via de novo pathway; (S)-dihydroorotate from bicarbonate: step 1/3. Functionally, large subunit of the glutamine-dependent carbamoyl phosphate synthetase (CPSase). CPSase catalyzes the formation of carbamoyl phosphate from the ammonia moiety of glutamine, carbonate, and phosphate donated by ATP, constituting the first step of 2 biosynthetic pathways, one leading to arginine and/or urea and the other to pyrimidine nucleotides. The large subunit (synthetase) binds the substrates ammonia (free or transferred from glutamine from the small subunit), hydrogencarbonate and ATP and carries out an ATP-coupled ligase reaction, activating hydrogencarbonate by forming carboxy phosphate which reacts with ammonia to form carbamoyl phosphate. The polypeptide is Carbamoyl phosphate synthase large chain (Leuconostoc citreum (strain KM20)).